A 100-amino-acid polypeptide reads, in one-letter code: Urease subunit gamma (100 aa).

Belongs to the urease gamma subunit family. In terms of assembly, heterotrimer of UreA (gamma), UreB (beta) and UreC (alpha) subunits. Three heterotrimers associate to form the active enzyme.

The protein resides in the cytoplasm. The catalysed reaction is urea + 2 H2O + H(+) = hydrogencarbonate + 2 NH4(+). Its pathway is nitrogen metabolism; urea degradation; CO(2) and NH(3) from urea (urease route): step 1/1. The sequence is that of Urease subunit gamma from Roseobacter denitrificans (strain ATCC 33942 / OCh 114) (Erythrobacter sp. (strain OCh 114)).